Reading from the N-terminus, the 107-residue chain is Phosphoribosyl-ATP pyrophosphatase (107 aa).

It belongs to the PRA-PH family.

The protein localises to the cytoplasm. It catalyses the reaction 1-(5-phospho-beta-D-ribosyl)-ATP + H2O = 1-(5-phospho-beta-D-ribosyl)-5'-AMP + diphosphate + H(+). It functions in the pathway amino-acid biosynthesis; L-histidine biosynthesis; L-histidine from 5-phospho-alpha-D-ribose 1-diphosphate: step 2/9. This chain is Phosphoribosyl-ATP pyrophosphatase, found in Bacillus mycoides (strain KBAB4) (Bacillus weihenstephanensis).